We begin with the raw amino-acid sequence, 209 residues long: Uracil phosphoribosyltransferase (209 aa).

Residues arginine 79, arginine 104, and 131 to 139 (DPMLATGGS) contribute to the 5-phospho-alpha-D-ribose 1-diphosphate site. Uracil-binding positions include isoleucine 194 and 199–201 (GDA). 5-phospho-alpha-D-ribose 1-diphosphate is bound at residue aspartate 200.

It belongs to the UPRTase family. Mg(2+) serves as cofactor.

The catalysed reaction is UMP + diphosphate = 5-phospho-alpha-D-ribose 1-diphosphate + uracil. The protein operates within pyrimidine metabolism; UMP biosynthesis via salvage pathway; UMP from uracil: step 1/1. With respect to regulation, allosterically activated by GTP. Catalyzes the conversion of uracil and 5-phospho-alpha-D-ribose 1-diphosphate (PRPP) to UMP and diphosphate. The polypeptide is Uracil phosphoribosyltransferase (Enterococcus faecalis (strain ATCC 700802 / V583)).